A 387-amino-acid chain; its full sequence is Acetylserotonin O-methyltransferase (387 aa).

S-adenosyl-L-methionine-binding positions include Tyr-153, Trp-170, Glu-216, 246–248, and Arg-263; that span reads GDF. The active-site Proton donor/acceptor is His-266. Substrate-binding residues include Asp-267 and Gln-317. Residues 354-387 are disordered; the sequence is AARGGGAGARSDGGGGDATSQTGSGTGSEVGAQD. Over residues 356–370 the composition is skewed to gly residues; the sequence is RGGGAGARSDGGGGD.

This sequence belongs to the class I-like SAM-binding methyltransferase superfamily. Cation-independent O-methyltransferase family. Homodimer. As to expression, expressed predominantly in the pineal gland (at protein level). Very low expression, if any, in the retina.

The enzyme catalyses N-acetylserotonin + S-adenosyl-L-methionine = melatonin + S-adenosyl-L-homocysteine + H(+). It functions in the pathway aromatic compound metabolism; melatonin biosynthesis; melatonin from serotonin: step 1/2. In terms of biological role, catalyzes the transfer of a methyl group onto N-acetylserotonin, producing melatonin (N-acetyl-5-methoxytryptamine). The polypeptide is Acetylserotonin O-methyltransferase (Asmt) (Mus musculus (Mouse)).